A 471-amino-acid chain; its full sequence is Isochorismate synthase MenF (471 aa).

Lys-226 serves as the catalytic Proton acceptor. The active-site Proton donor is Glu-275. Mg(2+)-binding residues include Glu-319 and Glu-454.

The protein belongs to the isochorismate synthase family. Mg(2+) serves as cofactor.

It catalyses the reaction chorismate = isochorismate. The protein operates within quinol/quinone metabolism; 1,4-dihydroxy-2-naphthoate biosynthesis; 1,4-dihydroxy-2-naphthoate from chorismate: step 1/7. Its pathway is quinol/quinone metabolism; menaquinone biosynthesis. Catalyzes the conversion of chorismate to isochorismate. This chain is Isochorismate synthase MenF, found in Bacillus subtilis (strain 168).